The sequence spans 687 residues: RNA-directed RNA polymerase 2a (687 aa).

Residues 427–540 (KYYLEVDLSK…ISSSPIVGCS (114 aa)) enclose the RdRp catalytic domain.

The protein belongs to the ssRNA positive-strand viruses RNA-directed RNA polymerase family. In terms of assembly, interacts with replication protein 1a.

It carries out the reaction RNA(n) + a ribonucleoside 5'-triphosphate = RNA(n+1) + diphosphate. In terms of biological role, RNA-dependent RNA polymerase which replicates the viral genome composed of 3 RNA segments, RNA1, RNA2 and RNA3. This is RNA-directed RNA polymerase 2a from Solanum lycopersicum (Tomato).